The sequence spans 562 residues: Potassium-transporting ATPase potassium-binding subunit (562 aa).

12 helical membrane-spanning segments follow: residues 6–26, 63–83, 132–152, 175–195, 253–273, 283–303, 327–347, 356–376, 379–399, 416–436, 483–503, and 526–546; these read FLLI…LGSF, ALAI…LLMM, GLTV…FALI, LYVL…QGVL, FVQM…FGQV, LIWA…YAEL, FGIL…CGAV, ALGG…FGGV, GLYG…LMIG, MTAL…ALAL, LLLA…VLAI, and LFIG…FIPA.

The protein belongs to the KdpA family. The system is composed of three essential subunits: KdpA, KdpB and KdpC.

It localises to the cell inner membrane. In terms of biological role, part of the high-affinity ATP-driven potassium transport (or Kdp) system, which catalyzes the hydrolysis of ATP coupled with the electrogenic transport of potassium into the cytoplasm. This subunit binds the periplasmic potassium ions and delivers the ions to the membrane domain of KdpB through an intramembrane tunnel. This Yersinia enterocolitica serotype O:8 / biotype 1B (strain NCTC 13174 / 8081) protein is Potassium-transporting ATPase potassium-binding subunit.